Here is a 402-residue protein sequence, read N- to C-terminus: CCA-adding enzyme (402 aa).

ATP-binding residues include Gly32 and Arg35. The CTP site is built by Gly32 and Arg35. The Mg(2+) site is built by Asp45 and Asp47. Residues Arg116, Asp159, Arg162, Arg165, and Arg168 each contribute to the ATP site. Arg116, Asp159, Arg162, Arg165, and Arg168 together coordinate CTP.

It belongs to the tRNA nucleotidyltransferase/poly(A) polymerase family. Bacterial CCA-adding enzyme type 3 subfamily. Homodimer. Mg(2+) is required as a cofactor.

It catalyses the reaction a tRNA precursor + 2 CTP + ATP = a tRNA with a 3' CCA end + 3 diphosphate. The enzyme catalyses a tRNA with a 3' CCA end + 2 CTP + ATP = a tRNA with a 3' CCACCA end + 3 diphosphate. Its function is as follows. Catalyzes the addition and repair of the essential 3'-terminal CCA sequence in tRNAs without using a nucleic acid template. Adds these three nucleotides in the order of C, C, and A to the tRNA nucleotide-73, using CTP and ATP as substrates and producing inorganic pyrophosphate. tRNA 3'-terminal CCA addition is required both for tRNA processing and repair. Also involved in tRNA surveillance by mediating tandem CCA addition to generate a CCACCA at the 3' terminus of unstable tRNAs. While stable tRNAs receive only 3'-terminal CCA, unstable tRNAs are marked with CCACCA and rapidly degraded. In Streptococcus agalactiae serotype III (strain NEM316), this protein is CCA-adding enzyme.